The primary structure comprises 1669 residues: Collagen alpha-1(IV) chain (1669 aa).

Positions 1–27 are cleaved as a signal peptide; it reads MGPRLSVWLLLLPAALLLHEEHSRAAA. A propeptide spans 28-172 (N-terminal propeptide (7S domain)); the sequence is KGGCAGSGCG…LGHVPGMLLK (145 aa). Disordered stretches follow at residues 48-459, 504-1382, and 1404-1431; these read KGER…EIGE, GRDG…PKGQ, and PGQK…DGLP. An N-linked (GlcNAc...) asparagine glycan is attached at Asn-126. The interval 173 to 1440 is triple-helical region; sequence GERGFPGIPG…PGSMGPPGTP (1268 aa). Over residues 196–214 the composition is skewed to pro residues; it reads VGPPGFTGPPGPPGPPGPP. Pro-204, Pro-207, and Pro-210 each carry 3-hydroxyproline. Residues 234 to 249 show a composition bias toward low complexity; sequence QGVSGPPGVPGQAQVQ. Basic and acidic residues-rich tracts occupy residues 250 to 263 and 289 to 298; these read EKGD…KGQK and PGKDGDKGEK. 3 stretches are compositionally biased toward pro residues: residues 367-376, 413-424, and 436-448; these read PGQPGPPGLP, PGPPGSPGPPGQ, and PGPP…PGIP. A compositionally biased stretch (basic and acidic residues) spans 535 to 545; it reads FDLRLKGDKGD. The span at 586-595 shows a compositional bias: gly residues; that stretch reads GPPGGVGFPG. 3-hydroxyproline is present on residues Pro-587 and Pro-602. Position 603 is a 4-hydroxyproline (Pro-603). The residue at position 605 (Pro-605) is a 3-hydroxyproline. Pro-606 carries the post-translational modification 4-hydroxyproline. Residues 611–620 show a composition bias toward low complexity; the sequence is AGPIGDKGQA. The segment covering 621 to 630 has biased composition (gly residues); sequence GFPGGPGSPG. 4-hydroxyproline occurs at positions 623, 626, 629, and 632. Pro-647 bears the 3-hydroxyproline mark. Residues 797–817 are compositionally biased toward gly residues; it reads GVPGIGPPGARGPPGGQGPPG. 2 stretches are compositionally biased toward low complexity: residues 856–875 and 977–986; these read QSGL…PGFP and PGKDGQAGQP. Positions 1011–1020 are enriched in gly residues; the sequence is GSVGGMGLPG. The segment covering 1086–1114 has biased composition (low complexity); it reads SIGIPGMPGSPGLKGSPGSVGYPGSPGLP. Pro-1214 carries the post-translational modification 3-hydroxyproline. The segment covering 1247-1258 has biased composition (pro residues); it reads PGLPGPMGPPGL. Positions 1290–1299 are enriched in gly residues; the sequence is GMPGIGGSPG. The span at 1368–1382 shows a compositional bias: low complexity; sequence PGLKGLQGLPGPKGQ. Pro-1424 is modified (3-hydroxyproline). The region spanning 1445-1669 is the Collagen IV NC1 domain; that stretch reads GFLVTRHSQT…SRCQVCMRRT (225 aa). 6 cysteine pairs are disulfide-bonded: Cys-1460–Cys-1551, Cys-1493–Cys-1548, Cys-1505–Cys-1511, Cys-1570–Cys-1665, Cys-1604–Cys-1662, and Cys-1616–Cys-1622. Met-1533 is covalently cross-linked (S-Lysyl-methionine sulfilimine (Met-Lys) (interchain with K-1651)). An S-Lysyl-methionine sulfilimine (Lys-Met) (interchain with M-1533) cross-link involves residue Lys-1651.

Belongs to the type IV collagen family. As to quaternary structure, there are six type IV collagen isoforms, alpha 1(IV)-alpha 6(IV), each of which can form a triple helix structure with 2 other chains to generate type IV collagen network. Interacts with EFEMP2. In terms of processing, lysines at the third position of the tripeptide repeating unit (G-X-Y) are hydroxylated. The modified lysines can be O-glycosylated. Contains 4-hydroxyproline. Prolines at the third position of the tripeptide repeating unit (G-X-Y) are hydroxylated in some or all of the chains. Post-translationally, contains 3-hydroxyproline. This modification occurs on the first proline residue in the sequence motif Gly-Pro-Hyp, where Hyp is 4-hydroxyproline. In terms of processing, type IV collagens contain numerous cysteine residues which are involved in inter- and intramolecular disulfide bonding. 12 of these, located in the NC1 domain, are conserved in all known type IV collagens. The trimeric structure of the NC1 domains is stabilized by covalent bonds (sulfilimine cross-links) between Lys and Met residues. These cross-links are important for the mechanical stability of the basement membrane. Sulfilimine cross-link is catalyzed by PXDN. Post-translationally, proteolytic processing produces the C-terminal NC1 peptide, arresten. Highly expressed in placenta.

It localises to the secreted. Its subcellular location is the extracellular space. The protein resides in the extracellular matrix. The protein localises to the basement membrane. In terms of biological role, type IV collagen is the major structural component of glomerular basement membranes (GBM), forming a 'chicken-wire' meshwork together with laminins, proteoglycans and entactin/nidogen. Arresten, comprising the C-terminal NC1 domain, inhibits angiogenesis and tumor formation. The C-terminal half is found to possess the anti-angiogenic activity. Specifically inhibits endothelial cell proliferation, migration and tube formation. This is Collagen alpha-1(IV) chain from Homo sapiens (Human).